A 109-amino-acid polypeptide reads, in one-letter code: Large ribosomal subunit protein uL24 (109 aa).

Belongs to the universal ribosomal protein uL24 family. In terms of assembly, part of the 50S ribosomal subunit.

Its function is as follows. One of two assembly initiator proteins, it binds directly to the 5'-end of the 23S rRNA, where it nucleates assembly of the 50S subunit. Functionally, one of the proteins that surrounds the polypeptide exit tunnel on the outside of the subunit. The polypeptide is Large ribosomal subunit protein uL24 (Rickettsia rickettsii (strain Iowa)).